The sequence spans 198 residues: Putative NADH dehydrogenase/NAD(P)H nitroreductase XOO4267 (198 aa).

It belongs to the nitroreductase family. HadB/RutE subfamily. FMN is required as a cofactor.

In Xanthomonas oryzae pv. oryzae (strain KACC10331 / KXO85), this protein is Putative NADH dehydrogenase/NAD(P)H nitroreductase XOO4267.